Consider the following 188-residue polypeptide: Adenine phosphoribosyltransferase (188 aa).

Belongs to the purine/pyrimidine phosphoribosyltransferase family. Homodimer.

It is found in the cytoplasm. The enzyme catalyses AMP + diphosphate = 5-phospho-alpha-D-ribose 1-diphosphate + adenine. It functions in the pathway purine metabolism; AMP biosynthesis via salvage pathway; AMP from adenine: step 1/1. Functionally, catalyzes a salvage reaction resulting in the formation of AMP, that is energically less costly than de novo synthesis. The sequence is that of Adenine phosphoribosyltransferase from Salinispora arenicola (strain CNS-205).